We begin with the raw amino-acid sequence, 678 residues long: Glycine--tRNA ligase beta subunit (678 aa).

It belongs to the class-II aminoacyl-tRNA synthetase family. Tetramer of two alpha and two beta subunits.

The protein resides in the cytoplasm. The enzyme catalyses tRNA(Gly) + glycine + ATP = glycyl-tRNA(Gly) + AMP + diphosphate. In Streptococcus pneumoniae (strain Hungary19A-6), this protein is Glycine--tRNA ligase beta subunit.